Here is a 407-residue protein sequence, read N- to C-terminus: 3-oxoacyl-[acyl-carrier-protein] synthase 1 (407 aa).

The Ketosynthase family 3 (KS3) domain maps to 1–406; that stretch reads MKRVVITGFG…GTNVSLILKK (406 aa). Active-site for beta-ketoacyl synthase activity residues include cysteine 164, histidine 300, and histidine 336.

The protein belongs to the thiolase-like superfamily. Beta-ketoacyl-ACP synthases family. In terms of assembly, homodimer.

The protein resides in the cytoplasm. The catalysed reaction is a fatty acyl-[ACP] + malonyl-[ACP] + H(+) = a 3-oxoacyl-[ACP] + holo-[ACP] + CO2. The enzyme catalyses (3Z)-decenoyl-[ACP] + malonyl-[ACP] + H(+) = 3-oxo-(5Z)-dodecenoyl-[ACP] + holo-[ACP] + CO2. The protein operates within lipid metabolism; fatty acid biosynthesis. Functionally, involved in the type II fatty acid elongation cycle. Catalyzes the elongation of a wide range of acyl-ACP by the addition of two carbons from malonyl-ACP to an acyl acceptor. Can also use unsaturated fatty acids. Catalyzes a key reaction in unsaturated fatty acid (UFA) synthesis, the elongation of the cis-3-decenoyl-ACP produced by FabA. The sequence is that of 3-oxoacyl-[acyl-carrier-protein] synthase 1 (fabB) from Buchnera aphidicola subsp. Schizaphis graminum (strain Sg).